The chain runs to 599 residues: MSTLFLRTLREDPADADVDSAKLLQRAGYIRKAAPGIWTWLPLGLAVLNKIEDVIREEINGIGAQEVHFPALLPREPYEATHRWEEYGDNIFRLKDRHEADYLLAPTHEEMFTLLVKDMYSSYKDLPVTLYQIQTKYRDEFRPRAGLIRGREFIMKDAYSFTVDEEGMRQAYMDERGAYERIFQRLDLKYVPVFAMSGPMGGSASEEFLAPMPIGEDTFALAPSGKAWNVEALHTPAVEAVDCSQTPDATKRATPNARTIDEMIAFANAEYPREDGRDWQASDILKNVVIAVKHAEDDEHDEPWRELVVVGIPGDRTIDMKRLEAQFAPAELEEATEDDLKAHPELVRGYIGPMGFGPQARGDDGTAETLRYLIDAHVAEGSAWFTGADEEGVDYYDLVYGRDFKADDVVEAVQVRDGDMSPDGSGPLSFERGVEIGQVFQLGLKYSEALDLKVLNQNGKTVPVWMGCYGIGVSRVLACIAETHHDDKGLAWPMNIAPAQVHVMATGKDEAAFEAAERLVDELSANGIEVLYDDRRKVSPGVKFKDAELIGVPIIAVAGRDTVNNGTIEVRDRDGSNSENISVDSVAQVIVDRVHEALK.

It belongs to the class-II aminoacyl-tRNA synthetase family. ProS type 1 subfamily. Homodimer.

The protein resides in the cytoplasm. It catalyses the reaction tRNA(Pro) + L-proline + ATP = L-prolyl-tRNA(Pro) + AMP + diphosphate. Functionally, catalyzes the attachment of proline to tRNA(Pro) in a two-step reaction: proline is first activated by ATP to form Pro-AMP and then transferred to the acceptor end of tRNA(Pro). As ProRS can inadvertently accommodate and process non-cognate amino acids such as alanine and cysteine, to avoid such errors it has two additional distinct editing activities against alanine. One activity is designated as 'pretransfer' editing and involves the tRNA(Pro)-independent hydrolysis of activated Ala-AMP. The other activity is designated 'posttransfer' editing and involves deacylation of mischarged Ala-tRNA(Pro). The misacylated Cys-tRNA(Pro) is not edited by ProRS. The chain is Proline--tRNA ligase from Bifidobacterium animalis subsp. lactis (strain AD011).